The sequence spans 352 residues: Heat-inducible transcription repressor HrcA (352 aa).

This sequence belongs to the HrcA family.

In terms of biological role, negative regulator of class I heat shock genes (grpE-dnaK-dnaJ and groELS operons). Prevents heat-shock induction of these operons. The chain is Heat-inducible transcription repressor HrcA from Latilactobacillus sakei (Lactobacillus sakei).